Reading from the N-terminus, the 291-residue chain is Nucleotide-binding protein lmo2474 (291 aa).

13–20 (GMSGAGKT) contacts ATP. Residue 63-66 (DLRG) participates in GTP binding.

It belongs to the RapZ-like family.

Its function is as follows. Displays ATPase and GTPase activities. The sequence is that of Nucleotide-binding protein lmo2474 from Listeria monocytogenes serovar 1/2a (strain ATCC BAA-679 / EGD-e).